The sequence spans 568 residues: Lariat debranching enzyme (568 aa).

Residues Cys8, His10, Asp39, and Asn84 each coordinate a divalent metal cation. Residues 124-154 are lariat recognition loop; it reads SGIFKSHDFKKGHFEFPPYNPETLRSVYHIR. Positions 174, 226, and 228 each coordinate a divalent metal cation. The disordered stretch occupies residues 388-568; that stretch reads IYGERGGKGA…TAVEDEESDS (181 aa). A compositionally biased stretch (polar residues) spans 417-428; it reads PSDTSGLSSSYN. Residues 432–444 are compositionally biased toward acidic residues; sequence ITIEDEWEEEEDG. Basic and acidic residues predominate over residues 467-480; that stretch reads DSDRDSSPQRETAK. Phosphothreonine is present on Thr478. Residues 534–549 show a composition bias toward low complexity; that stretch reads GETTQSSAGQTGGTPQ. A Phosphoserine modification is found at Ser568.

It belongs to the lariat debranching enzyme family. Fe(2+) is required as a cofactor. It depends on Zn(2+) as a cofactor. Mn(2+) serves as cofactor.

The protein resides in the nucleus. With respect to regulation, active in presence of diverse metals including Fe(2+), Zn(2+), Mn(2+). Also activated by Ca(2+). Binds two metal cations in two adjacent alpha and beta metal-binding pockets. Cleaves the 2'-5' phosphodiester linkage at the branch point of excised lariat intron RNA and converts them into linear molecules that can be subsequently degraded, thereby facilitating ribonucleotide turnover. Linked to its role in pre-mRNA processing mechanism, may also participate in retrovirus replication and have an antiviral cell-intrinsic defense function. This chain is Lariat debranching enzyme (dbr1), found in Danio rerio (Zebrafish).